We begin with the raw amino-acid sequence, 440 residues long: Ribosomal protein uS12 methylthiotransferase RimO (440 aa).

The 116-residue stretch at 2–117 (VKVGFVSLGC…LPNVIKKLYE (116 aa)) folds into the MTTase N-terminal domain. Positions 11, 47, 80, 156, 160, and 163 each coordinate [4Fe-4S] cluster. The Radical SAM core domain occupies 142-371 (ATPKFYAYIK…LNLQRKISLE (230 aa)). The TRAM domain occupies 374–440 (RKRISKKYEV…FEYDLVGEVI (67 aa)).

This sequence belongs to the methylthiotransferase family. RimO subfamily. Requires [4Fe-4S] cluster as cofactor.

The protein resides in the cytoplasm. The enzyme catalyses L-aspartate(89)-[ribosomal protein uS12]-hydrogen + (sulfur carrier)-SH + AH2 + 2 S-adenosyl-L-methionine = 3-methylsulfanyl-L-aspartate(89)-[ribosomal protein uS12]-hydrogen + (sulfur carrier)-H + 5'-deoxyadenosine + L-methionine + A + S-adenosyl-L-homocysteine + 2 H(+). Functionally, catalyzes the methylthiolation of an aspartic acid residue of ribosomal protein uS12. This is Ribosomal protein uS12 methylthiotransferase RimO from Caldicellulosiruptor saccharolyticus (strain ATCC 43494 / DSM 8903 / Tp8T 6331).